Reading from the N-terminus, the 241-residue chain is Accessory protein p30II (241 aa).

2 consecutive short sequence motifs (nuclear localization signal) follow at residues 73–78 (RRCRSR) and 91–98 (GPRRSRPR). A disordered region spans residues 86–153 (AFPPGGPRRS…HRNSPTDTKL (68 aa)). Residues 107–138 (PSSTVSSSSLSFNSSSKDNSPSTNSSTSRSSG) are compositionally biased toward low complexity. The Mitochondrial targeting signal signature appears at 175-184 (LRVWRLCTRR).

Belongs to the HTLV-1 accessory protein p30II family. In terms of assembly, p30II binds to the KIX domains of CREBBP and EP300.

It localises to the host nucleus. It is found in the host nucleolus. Its subcellular location is the host mitochondrion inner membrane. P30II is a multifunctional regulator that sequesters EP300/CREBBP and down-regulates CREB-responsive element (CRE) and Tax-responsive element (TRE) mediated transcription. Specifically binds and represses tax/rex mRNA nuclear export. Since Tax and Rex are positive regulators of viral gene expression, their inhibition by p30II reduces virion production, and allows the virus to escape the host immune surveillance and persist latently in an immune-competent host. Functionally, p13II increases mitochondrial permeability to monovalent cations, producing a rapid, membrane potential-dependent influx of potassium. This could involve a channel-forming activity. Interferes with cell proliferation and transformation and promotes apoptosis induced by ceramide and Fas ligand, probably using the Ras signaling. The protein is Accessory protein p30II of Human T-cell leukemia virus 1 (isolate Caribbea HS-35 subtype A) (HTLV-1).